Consider the following 775-residue polypeptide: Suppressor of glycerol defect protein 1 (775 aa).

Basic residues-rich tracts occupy residues 1–11 and 28–49; these read MRPIKKSRSLK and RRGK…RISR. 2 disordered regions span residues 1-101 and 152-253; these read MRPI…LLDP and IDDI…GGDK. Basic and acidic residues-rich tracts occupy residues 52 to 79, 177 to 193, and 209 to 223; these read NGYE…DAHR, TGDH…REGN, and DEFH…RMDP. The MIF4G domain occupies 262 to 463; it reads RRKLQGSLNK…ESITNLKENK (202 aa). One can recognise an MI domain in the interval 565–689; it reads TLRTSIFVAL…PLTILKHVDF (125 aa).

This sequence belongs to the CWC22 family.

It localises to the nucleus. The protein localises to the nucleolus. Its function is as follows. Involved in osmoregulatory glycerol response. This is Suppressor of glycerol defect protein 1 (sgd1) from Schizosaccharomyces pombe (strain 972 / ATCC 24843) (Fission yeast).